Here is a 564-residue protein sequence, read N- to C-terminus: Rho guanine nucleotide exchange factor 9 (564 aa).

One can recognise an SH3 domain in the interval 8–67 (DSIVSAEAVWDHATMANRELAFKAGDVIKVLDASNKDWWWGQIDDEEGWFPASFVRLWVN). The interval 100–110 (RDQMRANVINE) is interaction with GPHN. Residues 103–287 (MRANVINEIM…RNVTQQINER (185 aa)) form the DH domain. One can recognise a PH domain in the interval 318 to 425 (ELIYTGEMAW…WLRAFREERK (108 aa)). The interval 451–470 (KVPKQKGVNSARSVPPSYPP) is disordered. Ser502 carries the post-translational modification Phosphoserine.

In terms of assembly, interacts with GPHN.

The protein localises to the cytoplasm. The protein resides in the postsynaptic density. Functionally, acts as a guanine nucleotide exchange factor (GEF) for CDC42. Promotes formation of GPHN clusters. The protein is Rho guanine nucleotide exchange factor 9 (ARHGEF9) of Pongo abelii (Sumatran orangutan).